The chain runs to 1003 residues: DNA topoisomerase 3-alpha (1003 aa).

The Toprim domain occupies 35-179; it reads KVLCVAEKND…NLRVLRARFS (145 aa). Residues 197–617 enclose the Topo IA-type catalytic domain; it reads DQRVSDAVDV…QQVQKYKQVF (421 aa). Tyr-362 acts as the O-(5'-phospho-DNA)-tyrosine intermediate in catalysis. The tract at residues 400-426 is disordered; sequence GGPTPRNGSKSDQAHPPIHPTKYTSGL. The segment at 658-685 adopts a C4-type zinc-finger fold; sequence CPQCNKDMVLKTKKSGGFYLSCMGFPEC. Cys-815, Cys-817, Cys-840, and Cys-845 together coordinate Zn(2+). The GRF-type 1 zinc finger occupies 815–854; it reads CNCGREAVLLTVRKQGPNQGRHFYKCSNGDCNFFLWADSS. The segment at 856-888 is disordered; it reads STGGGTPTSASGPPGSSVGCPSSVGSHMDGFGS. Residues 862 to 888 show a composition bias toward low complexity; sequence PTSASGPPGSSVGCPSSVGSHMDGFGS. Residues Cys-899, Cys-901, Cys-924, and Cys-932 each coordinate Zn(2+). A GRF-type 2 zinc finger spans residues 899-941; that stretch reads CLCGQPAVTRTVQKDGPNKGRQFHTCAKPREQQCGFFQWVDEN. Residues 946–991 form a disordered region; sequence SFAAPAWPGGRGKAQRPEAASKRPRAGSSDAGSTVKKPRKCSLCHQ.

The protein belongs to the type IA topoisomerase family. As to quaternary structure, binds ssDNA. Interacts (via N-terminal region) with BLM; the interaction is direct. Directly interacts with RMI1. Component of the RMI complex, containing at least TOP3A, RMI1 and RMI2. The RMI complex interacts with BLM. Requires Mg(2+) as cofactor. As to expression, highly expressed in testis.

The protein localises to the mitochondrion matrix. It carries out the reaction ATP-independent breakage of single-stranded DNA, followed by passage and rejoining.. Its function is as follows. Releases the supercoiling and torsional tension of DNA introduced during the DNA replication and transcription by transiently cleaving and rejoining one strand of the DNA duplex. Introduces a single-strand break via transesterification at a target site in duplex DNA. The scissile phosphodiester is attacked by the catalytic tyrosine of the enzyme, resulting in the formation of a DNA-(5'-phosphotyrosyl)-enzyme intermediate and the expulsion of a 3'-OH DNA strand. The free DNA strand then undergoes passage around the unbroken strand thus removing DNA supercoils. Finally, in the religation step, the DNA 3'-OH attacks the covalent intermediate to expel the active-site tyrosine and restore the DNA phosphodiester backbone. As an essential component of the RMI complex it is involved in chromosome separation and the processing of homologous recombination intermediates to limit DNA crossover formation in cells. Has DNA decatenation activity. It is required for mtDNA decatenation and segregation after completion of replication, in a process that does not require BLM, RMI1 and RMI2. The polypeptide is DNA topoisomerase 3-alpha (Top3a) (Mus musculus (Mouse)).